We begin with the raw amino-acid sequence, 1170 residues long: Chromosome partition protein Smc (1170 aa).

32–39 is a binding site for ATP; the sequence is PNGCGKSN. 3 coiled-coil regions span residues 169-215, 245-365, and 401-508; these read GVSK…AVVA, DRQR…DAAA, and EAAH…TQGK. The SMC hinge domain occupies 520–623; it reads ALPRLWKKLH…VADDLAQALA (104 aa). 2 coiled-coil regions span residues 664–944 and 983–1020; these read QEIE…KEKL and ERKVFLDAQSADLTNAIETLEDAIRKIDQETRALLQAT.

The protein belongs to the SMC family. Homodimer.

It is found in the cytoplasm. Required for chromosome condensation and partitioning. The protein is Chromosome partition protein Smc of Burkholderia pseudomallei (strain 1710b).